A 284-amino-acid chain; its full sequence is Spermidine synthase (284 aa).

Residues 6–241 (NGWFSEISEF…GSIGFILCSL (236 aa)) enclose the PABS domain. Glutamine 37 contributes to the S-adenosyl 3-(methylsulfanyl)propylamine binding site. Residue tyrosine 67 coordinates putrescine. S-adenosyl 3-(methylsulfanyl)propylamine is bound by residues glutamine 68, aspartate 92, glutamate 112, 143–144 (DG), and aspartate 161. Aspartate 161 functions as the Proton acceptor in the catalytic mechanism. Residues 161 to 164 (DSSD) and tyrosine 229 contribute to the putrescine site.

Belongs to the spermidine/spermine synthase family.

It carries out the reaction S-adenosyl 3-(methylsulfanyl)propylamine + putrescine = S-methyl-5'-thioadenosine + spermidine + H(+). It functions in the pathway amine and polyamine biosynthesis; spermidine biosynthesis; spermidine from putrescine: step 1/1. Functionally, catalyzes the production of spermidine from putrescine and decarboxylated S-adenosylmethionine (dcSAM). Has a strong preference for putrescine as substrate. This is Spermidine synthase (spsA) from Dictyostelium discoideum (Social amoeba).